A 408-amino-acid polypeptide reads, in one-letter code: Aspartate aminotransferase, cytoplasmic (408 aa).

The L-aspartate site is built by Gly36, Trp133, and Asn187. Lys251 carries the post-translational modification N6-(pyridoxal phosphate)lysine. Arg379 serves as a coordination point for L-aspartate.

It belongs to the class-I pyridoxal-phosphate-dependent aminotransferase family. Homodimer. Requires pyridoxal 5'-phosphate as cofactor. As to expression, expressed in all somatic tissues including the nervous system.

The protein localises to the cytoplasm. The catalysed reaction is L-aspartate + 2-oxoglutarate = oxaloacetate + L-glutamate. Its function is as follows. Biosynthesis of L-glutamate from L-aspartate. Important regulator of levels of glutamate, the major excitatory neurotransmitter of the central nervous system. This is Aspartate aminotransferase, cytoplasmic from Caenorhabditis elegans.